We begin with the raw amino-acid sequence, 272 residues long: uncharacterized protein (272 aa).

A signal peptide spans 1 to 20 (MKLRKIFLLPLISLSTLSVA). Cys-21 is lipidated: N-palmitoyl cysteine. Residue Cys-21 is the site of S-diacylglycerol cysteine attachment.

The protein belongs to the MG439/MG440 family.

The protein resides in the cell membrane. This is an uncharacterized protein from Mycoplasma genitalium (strain ATCC 33530 / DSM 19775 / NCTC 10195 / G37) (Mycoplasmoides genitalium).